The following is a 529-amino-acid chain: Bifunctional purine biosynthesis protein PurH (529 aa).

One can recognise an MGS-like domain in the interval 2–149 (TNLVPVGRAL…KNHRFVNVVT (148 aa)).

Belongs to the PurH family.

It catalyses the reaction (6R)-10-formyltetrahydrofolate + 5-amino-1-(5-phospho-beta-D-ribosyl)imidazole-4-carboxamide = 5-formamido-1-(5-phospho-D-ribosyl)imidazole-4-carboxamide + (6S)-5,6,7,8-tetrahydrofolate. The enzyme catalyses IMP + H2O = 5-formamido-1-(5-phospho-D-ribosyl)imidazole-4-carboxamide. Its pathway is purine metabolism; IMP biosynthesis via de novo pathway; 5-formamido-1-(5-phospho-D-ribosyl)imidazole-4-carboxamide from 5-amino-1-(5-phospho-D-ribosyl)imidazole-4-carboxamide (10-formyl THF route): step 1/1. It participates in purine metabolism; IMP biosynthesis via de novo pathway; IMP from 5-formamido-1-(5-phospho-D-ribosyl)imidazole-4-carboxamide: step 1/1. In Cereibacter sphaeroides (strain ATCC 17029 / ATH 2.4.9) (Rhodobacter sphaeroides), this protein is Bifunctional purine biosynthesis protein PurH.